The following is a 116-amino-acid chain: MGTSELLKHIYDINLSYLLLAQRLINDEKASAMFRLGINDEMADTLMQLTLPQMVKLAETNQLICHFRFNDHNTIKVLTQESRVDDLQQIHTGILLSSHLLQQLTSKEENLPKKRA.

It belongs to the FlhD family. As to quaternary structure, homodimer; disulfide-linked. Forms a heterohexamer composed of two FlhC and four FlhD subunits. Each FlhC binds a FlhD dimer, forming a heterotrimer, and a hexamer assembles by dimerization of two heterotrimers.

It localises to the cytoplasm. Its function is as follows. Functions in complex with FlhC as a master transcriptional regulator that regulates transcription of several flagellar and non-flagellar operons by binding to their promoter region. Activates expression of class 2 flagellar genes, including fliA, which is a flagellum-specific sigma factor that turns on the class 3 genes. Also regulates genes whose products function in a variety of physiological pathways. This chain is Flagellar transcriptional regulator FlhD, found in Pectobacterium carotovorum subsp. carotovorum (strain PC1).